The chain runs to 87 residues: Cuticle protein 1 (87 aa).

Position 1 is a pyrrolidone carboxylic acid (Q1). A run of 3 repeats spans residues 5–20 (YPAGLNPALCPNYPNC), 43–58 (YPAGVSPAACPNYPFC), and 71–86 (YPAGVHPAACPNYPYC). Intrachain disulfides connect C14–C20, C52–C58, and C80–C86.

The polypeptide is Cuticle protein 1 (Blaberus craniifer (Death's head cockroach)).